The primary structure comprises 423 residues: uncharacterized protein (423 aa).

The segment at 383–423 is disordered; sequence ARGTTGGGGTRSGTSTDGQEDGRKPPVVVIREQPPPGNPPR.

The protein belongs to the mycobacterial PPE family.

This is an uncharacterized protein from Mycobacterium tuberculosis (strain CDC 1551 / Oshkosh).